Here is a 593-residue protein sequence, read N- to C-terminus: Inactive metallocarboxypeptidase ECM14 (593 aa).

An N-terminal signal peptide occupies residues 1 to 22 (MHVTVQLSLLLSLASSLPLVSA). The propeptide occupies 23 to 175 (IPQHDGQAYT…QAIYESYPKN (153 aa)). 2 disordered regions span residues 75–98 (VPQRGKDSETKTGKQSEAASKAPA) and 172–202 (YPKNNPSSPSHPGATTRRFSPSASTPESQPH). The span at 78–88 (RGKDSETKTGK) shows a compositional bias: basic and acidic residues. Positions 188–199 (RRFSPSASTPES) are enriched in polar residues. The Peptidase M14 domain occupies 211–537 (DYQPLSVLLP…HAVVAMGKFL (327 aa)). Zn(2+) contacts are provided by His-276 and Glu-279. Substrate-binding positions include 276–279 (HARE), Arg-334, and 351–352 (DR). Cysteines 345 and 368 form a disulfide. N-linked (GlcNAc...) asparagine glycosylation occurs at Asn-361. Residue His-408 coordinates Zn(2+). 409–410 (SY) is a substrate binding site. The interval 548 to 593 (DEPHAGEQTQDNSYDEDGDNLFRAQGGDPQVRFTRRNIGAHDDDSE) is disordered.

Belongs to the peptidase M14 family. Zn(2+) serves as cofactor.

It localises to the vacuole. The protein resides in the secreted. In terms of biological role, inactive carboxypeptidase that may play a role in cell wall organization and biogenesis. The protein is Inactive metallocarboxypeptidase ECM14 (ECM14) of Arthroderma otae (strain ATCC MYA-4605 / CBS 113480) (Microsporum canis).